The sequence spans 560 residues: Potassium-transporting ATPase potassium-binding subunit (560 aa).

The next 12 membrane-spanning stretches (helical) occupy residues 11–31 (IFLLLIVIAVPLGKYLYVAFF), 63–83 (SYCTALLIVNAALLGISYGLL), 134–154 (FVTMMMFTSAATGLTVATALI), 179–199 (LLPLSVIVTILLVAFGVPQTF), 254–274 (VIEMLSMWCIPAALPFTYGHA), 282–302 (WVLFATMFVLFVMMLGVVYNA), 329–349 (FGIPLSSLFTAITTAATTGSV), 356–376 (LTPIGGLVPLALMMLNNVFGG), 379–399 (VGFVNIMMYAMIAVFLSGLMV), 417–437 (LIVIALLLHPLIILAPSAIAL), 488–508 (VVMLLGRYVSIIAMLAVAGSL), and 530–550 (VILFGTVFIIGALTFFPVLIL).

This sequence belongs to the KdpA family. The system is composed of three essential subunits: KdpA, KdpB and KdpC.

It is found in the cell membrane. Functionally, part of the high-affinity ATP-driven potassium transport (or Kdp) system, which catalyzes the hydrolysis of ATP coupled with the electrogenic transport of potassium into the cytoplasm. This subunit binds the extracellular potassium ions and delivers the ions to the membrane domain of KdpB through an intramembrane tunnel. The chain is Potassium-transporting ATPase potassium-binding subunit from Geobacillus kaustophilus (strain HTA426).